The following is a 341-amino-acid chain: Tetraacyldisaccharide 4'-kinase (341 aa).

54–61 (TVGGAGKT) is an ATP binding site.

The protein belongs to the LpxK family.

It catalyses the reaction a lipid A disaccharide + ATP = a lipid IVA + ADP + H(+). It functions in the pathway glycolipid biosynthesis; lipid IV(A) biosynthesis; lipid IV(A) from (3R)-3-hydroxytetradecanoyl-[acyl-carrier-protein] and UDP-N-acetyl-alpha-D-glucosamine: step 6/6. Its function is as follows. Transfers the gamma-phosphate of ATP to the 4'-position of a tetraacyldisaccharide 1-phosphate intermediate (termed DS-1-P) to form tetraacyldisaccharide 1,4'-bis-phosphate (lipid IVA). The protein is Tetraacyldisaccharide 4'-kinase of Brucella anthropi (strain ATCC 49188 / DSM 6882 / CCUG 24695 / JCM 21032 / LMG 3331 / NBRC 15819 / NCTC 12168 / Alc 37) (Ochrobactrum anthropi).